The primary structure comprises 211 residues: Rho-related GTP-binding protein RhoF (211 aa).

The residue at position 1 (Met-1) is an N-acetylmethionine. 26–33 (GDGGCGKT) is a GTP binding site. Residues 48 to 56 (YAPSVFEKY) carry the Effector region motif. GTP is bound by residues 73–77 (DTAGQ) and 131–134 (CKTD). Position 208 is a cysteine methyl ester (Cys-208). Cys-208 carries S-geranylgeranyl cysteine lipidation. Positions 209 to 211 (LLL) are cleaved as a propeptide — removed in mature form.

It belongs to the small GTPase superfamily. Rho family.

It localises to the cell membrane. It is found in the cytoplasm. Its subcellular location is the cytoskeleton. Functionally, plasma membrane-associated small GTPase which cycles between an active GTP-bound and an inactive GDP-bound state. Causes the formation of thin, actin-rich surface projections called filopodia. Functions cooperatively with CDC42 and Rac to generate additional structures, increasing the diversity of actin-based morphology. This Mus musculus (Mouse) protein is Rho-related GTP-binding protein RhoF (Rhof).